Reading from the N-terminus, the 228-residue chain is Glucose-induced degradation protein 8 homolog (228 aa).

The region spanning S29–T61 is the LisH domain. In terms of domain architecture, CTLH spans S67–E124.

It belongs to the GID8 family.

It localises to the cytoplasm. The protein localises to the nucleus. Functionally, core component of the CTLH E3 ubiquitin-protein ligase complex that mediates ubiquitination and subsequent proteasomal degradation of target proteins. Acts as a positive regulator of Wnt signaling pathway by promoting beta-catenin (CTNNB1) nuclear accumulation. This chain is Glucose-induced degradation protein 8 homolog, found in Dictyostelium discoideum (Social amoeba).